Reading from the N-terminus, the 256-residue chain is Type III pantothenate kinase (256 aa).

Position 6-13 (6-13) interacts with ATP; sequence DIGNTHTV. Substrate is bound by residues Tyr100 and 107–110; that span reads GADR. The active-site Proton acceptor is Asp109. Residue Asp129 coordinates K(+). Residue Thr132 participates in ATP binding. Thr184 serves as a coordination point for substrate.

This sequence belongs to the type III pantothenate kinase family. In terms of assembly, homodimer. NH4(+) serves as cofactor. The cofactor is K(+).

It is found in the cytoplasm. The enzyme catalyses (R)-pantothenate + ATP = (R)-4'-phosphopantothenate + ADP + H(+). It functions in the pathway cofactor biosynthesis; coenzyme A biosynthesis; CoA from (R)-pantothenate: step 1/5. Its function is as follows. Catalyzes the phosphorylation of pantothenate (Pan), the first step in CoA biosynthesis. The sequence is that of Type III pantothenate kinase from Acidothermus cellulolyticus (strain ATCC 43068 / DSM 8971 / 11B).